The following is a 229-amino-acid chain: Potassium/proton antiporter CemA (229 aa).

3 consecutive transmembrane segments (helical) span residues 6–26, 107–127, and 189–209; these read AFIP…ISLC, ILHF…SFWG, and ILSG…KYWI.

Belongs to the CemA family.

It localises to the plastid. It is found in the chloroplast inner membrane. The enzyme catalyses K(+)(in) + H(+)(out) = K(+)(out) + H(+)(in). Contributes to K(+)/H(+) antiport activity by supporting proton efflux to control proton extrusion and homeostasis in chloroplasts in a light-dependent manner to modulate photosynthesis. Prevents excessive induction of non-photochemical quenching (NPQ) under continuous-light conditions. Indirectly promotes efficient inorganic carbon uptake into chloroplasts. This is Potassium/proton antiporter CemA from Nasturtium officinale (Watercress).